A 252-amino-acid chain; its full sequence is Adenosylcobinamide-GDP ribazoletransferase (252 aa).

The next 5 membrane-spanning stretches (helical) occupy residues 33 to 53 (FISP…VVLL), 105 to 125 (TGSG…IATL), 132 to 152 (LWFF…LLGL), 184 to 204 (FAIL…LLVF), and 215 to 235 (MSGD…LLVA).

The protein belongs to the CobS family. The cofactor is Mg(2+).

The protein localises to the cell membrane. It catalyses the reaction alpha-ribazole + adenosylcob(III)inamide-GDP = adenosylcob(III)alamin + GMP + H(+). The enzyme catalyses alpha-ribazole 5'-phosphate + adenosylcob(III)inamide-GDP = adenosylcob(III)alamin 5'-phosphate + GMP + H(+). It functions in the pathway cofactor biosynthesis; adenosylcobalamin biosynthesis; adenosylcobalamin from cob(II)yrinate a,c-diamide: step 7/7. In terms of biological role, joins adenosylcobinamide-GDP and alpha-ribazole to generate adenosylcobalamin (Ado-cobalamin). Also synthesizes adenosylcobalamin 5'-phosphate from adenosylcobinamide-GDP and alpha-ribazole 5'-phosphate. The protein is Adenosylcobinamide-GDP ribazoletransferase of Sulfolobus acidocaldarius (strain ATCC 33909 / DSM 639 / JCM 8929 / NBRC 15157 / NCIMB 11770).